The following is a 147-amino-acid chain: 3-dehydroquinate dehydratase (147 aa).

The active-site Proton acceptor is Tyr-23. Substrate-binding residues include Asn-74, His-80, and Asp-87. The active-site Proton donor is His-100. Substrate-binding positions include Leu-101–Ser-102 and Arg-111.

It belongs to the type-II 3-dehydroquinase family. In terms of assembly, homododecamer.

It carries out the reaction 3-dehydroquinate = 3-dehydroshikimate + H2O. It functions in the pathway metabolic intermediate biosynthesis; chorismate biosynthesis; chorismate from D-erythrose 4-phosphate and phosphoenolpyruvate: step 3/7. Its function is as follows. Catalyzes a trans-dehydration via an enolate intermediate. The chain is 3-dehydroquinate dehydratase from Clostridium botulinum (strain ATCC 19397 / Type A).